Reading from the N-terminus, the 253-residue chain is NAC transcription factor 32 (253 aa).

In terms of domain architecture, NAC spans Phe-10–Lys-160. The DNA-binding element occupies Val-106–Lys-166.

In terms of tissue distribution, expressed in germinating seeds, roots, leaf veins, open flowers and silique stalks.

The protein resides in the nucleus. Functionally, transcriptional activator that positively regulates age-dependent senescence, dark-induced leaf senescence and stress-induced senescence. Regulates leaf senescence through the modulation of the expression of senescence-associated genes SGR1/NYE1, SAG113 and SAUR36/SAG201, which are involved in chlorophyll degradation, and abscisic acid (ABA) and auxin promotion of senescence, respectively. Promotes reactive oxygen species (ROS) production during age-dependent and stress-induced senescence. Positively regulates auxin-mediated responses in roots. Stress-responsive NAC transcription factor involved in ABA-inducible leaf senescence signaling. Required for normal seed development and morphology. The chain is NAC transcription factor 32 from Arabidopsis thaliana (Mouse-ear cress).